Consider the following 303-residue polypeptide: Polyisoprenyl-teichoic acid--peptidoglycan teichoic acid transferase TagU (303 aa).

At 1-6 the chain is on the cytoplasmic side; that stretch reads MSKGKK. Residues 7–27 form a helical; Signal-anchor for type II membrane protein membrane-spanning segment; that stretch reads IFAIIFGIILVLFLAVVGMGA. At 28–303 the chain is on the extracellular side; the sequence is KLYWDVSKSM…QELKNQLNTK (276 aa).

The protein belongs to the LytR/CpsA/Psr (LCP) family.

It localises to the cell membrane. Its pathway is cell wall biogenesis. May catalyze the final step in cell wall teichoic acid biosynthesis, the transfer of the anionic cell wall polymers (APs) from their lipid-linked precursor to the cell wall peptidoglycan (PG). In Enterococcus faecalis (strain ATCC 700802 / V583), this protein is Polyisoprenyl-teichoic acid--peptidoglycan teichoic acid transferase TagU.